Reading from the N-terminus, the 521-residue chain is GMP synthase [glutamine-hydrolyzing] (521 aa).

One can recognise a Glutamine amidotransferase type-1 domain in the interval 8-203 (KILILDFGAQ…VVDVCGCQTL (196 aa)). C85 functions as the Nucleophile in the catalytic mechanism. Active-site residues include H177 and E179. One can recognise a GMPS ATP-PPase domain in the interval 204–396 (WTAANIIEDQ…LGLPRTMVYR (193 aa)). Residue 231 to 237 (SGGVDSS) participates in ATP binding.

In terms of assembly, homodimer.

The catalysed reaction is XMP + L-glutamine + ATP + H2O = GMP + L-glutamate + AMP + diphosphate + 2 H(+). It participates in purine metabolism; GMP biosynthesis; GMP from XMP (L-Gln route): step 1/1. In terms of biological role, catalyzes the synthesis of GMP from XMP. In Xanthomonas axonopodis pv. citri (strain 306), this protein is GMP synthase [glutamine-hydrolyzing].